A 420-amino-acid chain; its full sequence is Serine hydroxymethyltransferase (420 aa).

Residues L121 and 125–127 (GHL) contribute to the (6S)-5,6,7,8-tetrahydrofolate site. Position 230 is an N6-(pyridoxal phosphate)lysine (K230). 354 to 356 (SPF) contributes to the (6S)-5,6,7,8-tetrahydrofolate binding site.

The protein belongs to the SHMT family. Homodimer. Requires pyridoxal 5'-phosphate as cofactor.

The protein resides in the cytoplasm. It catalyses the reaction (6R)-5,10-methylene-5,6,7,8-tetrahydrofolate + glycine + H2O = (6S)-5,6,7,8-tetrahydrofolate + L-serine. Its pathway is one-carbon metabolism; tetrahydrofolate interconversion. It participates in amino-acid biosynthesis; glycine biosynthesis; glycine from L-serine: step 1/1. In terms of biological role, catalyzes the reversible interconversion of serine and glycine with tetrahydrofolate (THF) serving as the one-carbon carrier. This reaction serves as the major source of one-carbon groups required for the biosynthesis of purines, thymidylate, methionine, and other important biomolecules. Also exhibits THF-independent aldolase activity toward beta-hydroxyamino acids, producing glycine and aldehydes, via a retro-aldol mechanism. This chain is Serine hydroxymethyltransferase, found in Rickettsia africae (strain ESF-5).